We begin with the raw amino-acid sequence, 701 residues long: MLTDLHKVRNIGIMAHIDAGKTTTTERHLFYTGVNHKLGETHDGGATTDWMEQEKERGITITSAAVTCFWNDHQINIIDNPGHVDFTVEVERSLRVLDGAVAVFDGKEGVEPQSETVWRQADKYDVPRICFVNKMDKLGADFYFTVDTIVKRLGARPLVMQLPIGAENDFVGVVDLISMKAFVWPGDANGIVTMGASYEIEIRQLQEKAEEEYRNELVEAVAETSEELMEKYLEGEELTVEEIQAGVRQLTVNAEAYPVFCGSAFKNRGVQPMLDAVVAYLPNPLDAGPVKGHAVNDEEVVLEREVSKEAPFSALAFKIATHPFFGTLTFIRVYSGRLESGAQVLNATKGKKERIGKLFQMHANKENPVDEVVAGHIYAVIGLKDTTTGDTLCDPANPIILESMTFPEPVISVAIEPKTKGDQEKLSTAIQKLVAEDPTFRVNLNEETGQTEIGGMGELHLDVFVDRMKREFKVEANVGKPQVAYRETIKRKVDKVDYTHKKQTGGSGQFAKVQLSFEPLDTPRGTVYEFENAITGGRVPREYIPSVDAGIQDAMKFGVLAGYPMVRVKATSLDGAYHDVDSSEMAFRIAGSQAFKEGVRKATPIILEPLMAVEVRTPEEFMGDVIGDLNSRRGQIQIQSMEDATGVKVVNALVPLSEMFGYIGDLRSKTQGRAVYSMTFHSYAEVPKAVADEIVQKSQGE.

Positions 6-285 constitute a tr-type G domain; sequence HKVRNIGIMA…AVVAYLPNPL (280 aa). Residues 15–22, 79–83, and 133–136 each bind GTP; these read AHIDAGKT, DNPGH, and NKMD.

It belongs to the TRAFAC class translation factor GTPase superfamily. Classic translation factor GTPase family. EF-G/EF-2 subfamily.

Its subcellular location is the cytoplasm. Its function is as follows. Catalyzes the GTP-dependent ribosomal translocation step during translation elongation. During this step, the ribosome changes from the pre-translocational (PRE) to the post-translocational (POST) state as the newly formed A-site-bound peptidyl-tRNA and P-site-bound deacylated tRNA move to the P and E sites, respectively. Catalyzes the coordinated movement of the two tRNA molecules, the mRNA and conformational changes in the ribosome. This Micrococcus luteus (Micrococcus lysodeikticus) protein is Elongation factor G (fusA).